Consider the following 255-residue polypeptide: Zinc finger CCCH domain-containing protein 37 (255 aa).

2 consecutive C3H1-type zinc fingers follow at residues 98-128 and 137-159; these read AYTGEPCPDFRRRPGAACPRGSTCPFAHGTF and YRTRPCRAGVACRRRVCFFAHTA.

The sequence is that of Zinc finger CCCH domain-containing protein 37 from Oryza sativa subsp. japonica (Rice).